We begin with the raw amino-acid sequence, 178 residues long: ATP synthase subunit delta (178 aa).

This sequence belongs to the ATPase delta chain family. In terms of assembly, F-type ATPases have 2 components, F(1) - the catalytic core - and F(0) - the membrane proton channel. F(1) has five subunits: alpha(3), beta(3), gamma(1), delta(1), epsilon(1). F(0) has three main subunits: a(1), b(2) and c(10-14). The alpha and beta chains form an alternating ring which encloses part of the gamma chain. F(1) is attached to F(0) by a central stalk formed by the gamma and epsilon chains, while a peripheral stalk is formed by the delta and b chains.

The protein resides in the cell inner membrane. Its function is as follows. F(1)F(0) ATP synthase produces ATP from ADP in the presence of a proton or sodium gradient. F-type ATPases consist of two structural domains, F(1) containing the extramembraneous catalytic core and F(0) containing the membrane proton channel, linked together by a central stalk and a peripheral stalk. During catalysis, ATP synthesis in the catalytic domain of F(1) is coupled via a rotary mechanism of the central stalk subunits to proton translocation. In terms of biological role, this protein is part of the stalk that links CF(0) to CF(1). It either transmits conformational changes from CF(0) to CF(1) or is implicated in proton conduction. The sequence is that of ATP synthase subunit delta from Marinobacter nauticus (strain ATCC 700491 / DSM 11845 / VT8) (Marinobacter aquaeolei).